The chain runs to 177 residues: Large ribosomal subunit protein uL6 (177 aa).

Belongs to the universal ribosomal protein uL6 family. In terms of assembly, part of the 50S ribosomal subunit.

Its function is as follows. This protein binds to the 23S rRNA, and is important in its secondary structure. It is located near the subunit interface in the base of the L7/L12 stalk, and near the tRNA binding site of the peptidyltransferase center. This chain is Large ribosomal subunit protein uL6, found in Aliivibrio fischeri (strain MJ11) (Vibrio fischeri).